The following is a 221-amino-acid chain: Cytidylate kinase 1 (221 aa).

7–15 (GPSASGKSS) provides a ligand contact to ATP.

Belongs to the cytidylate kinase family. Type 1 subfamily.

It is found in the cytoplasm. The enzyme catalyses CMP + ATP = CDP + ADP. It carries out the reaction dCMP + ATP = dCDP + ADP. The chain is Cytidylate kinase 1 from Borreliella afzelii (strain PKo) (Borrelia afzelii).